A 197-amino-acid chain; its full sequence is Imidazoleglycerol-phosphate dehydratase (197 aa).

It belongs to the imidazoleglycerol-phosphate dehydratase family.

It localises to the cytoplasm. The catalysed reaction is D-erythro-1-(imidazol-4-yl)glycerol 3-phosphate = 3-(imidazol-4-yl)-2-oxopropyl phosphate + H2O. Its pathway is amino-acid biosynthesis; L-histidine biosynthesis; L-histidine from 5-phospho-alpha-D-ribose 1-diphosphate: step 6/9. The protein is Imidazoleglycerol-phosphate dehydratase of Pseudomonas fluorescens (strain SBW25).